The chain runs to 123 residues: Large ribosomal subunit protein uL14 (123 aa).

The protein belongs to the universal ribosomal protein uL14 family. Part of the 50S ribosomal subunit. Forms a cluster with proteins L3 and L19. In the 70S ribosome, L14 and L19 interact and together make contacts with the 16S rRNA in bridges B5 and B8.

Its function is as follows. Binds to 23S rRNA. Forms part of two intersubunit bridges in the 70S ribosome. The sequence is that of Large ribosomal subunit protein uL14 from Tropheryma whipplei (strain TW08/27) (Whipple's bacillus).